We begin with the raw amino-acid sequence, 249 residues long: Sugar fermentation stimulation protein homolog (249 aa).

The protein belongs to the SfsA family.

In Synechococcus sp. (strain CC9902), this protein is Sugar fermentation stimulation protein homolog.